A 357-amino-acid chain; its full sequence is Putative RING-H2 finger protein ATL37 (357 aa).

The first 31 residues, Met1–Cys31, serve as a signal peptide directing secretion. A helical transmembrane segment spans residues Ser47–Leu67. The RING-type; atypical zinc finger occupies Cys120–Arg162. A disordered region spans residues Ser172–Asn210. The span at Leu198 to Asn210 shows a compositional bias: polar residues. A Phosphoserine modification is found at Ser273. Disordered regions lie at residues Arg281–Gln304 and Leu327–Asn357. A compositionally biased stretch (polar residues) spans Ser283–Gln304. Residues Asn340 to Asn357 are compositionally biased toward basic and acidic residues.

The protein belongs to the RING-type zinc finger family. ATL subfamily.

The protein localises to the membrane. The enzyme catalyses S-ubiquitinyl-[E2 ubiquitin-conjugating enzyme]-L-cysteine + [acceptor protein]-L-lysine = [E2 ubiquitin-conjugating enzyme]-L-cysteine + N(6)-ubiquitinyl-[acceptor protein]-L-lysine.. Its pathway is protein modification; protein ubiquitination. This chain is Putative RING-H2 finger protein ATL37 (ATL37), found in Arabidopsis thaliana (Mouse-ear cress).